Consider the following 140-residue polypeptide: 3-hydroxyacyl-[acyl-carrier-protein] dehydratase FabZ (140 aa).

Histidine 48 is an active-site residue.

Belongs to the thioester dehydratase family. FabZ subfamily.

Its subcellular location is the cytoplasm. The enzyme catalyses a (3R)-hydroxyacyl-[ACP] = a (2E)-enoyl-[ACP] + H2O. Functionally, involved in unsaturated fatty acids biosynthesis. Catalyzes the dehydration of short chain beta-hydroxyacyl-ACPs and long chain saturated and unsaturated beta-hydroxyacyl-ACPs. The protein is 3-hydroxyacyl-[acyl-carrier-protein] dehydratase FabZ of Pelotomaculum thermopropionicum (strain DSM 13744 / JCM 10971 / SI).